The chain runs to 269 residues: Cbp/p300-interacting transactivator 2 (269 aa).

The segment at 142 to 200 (AGHQMNGTNQHFRDCNPKHSGGSSTPGGAGGSGTPGGSGGTSGGAGGSSAGGSGGGSTM) is disordered. Residues 165-198 (STPGGAGGSGTPGGSGGTSGGAGGSSAGGSGGGS) show a composition bias toward gly residues.

The protein belongs to the CITED family. Interacts (via C-terminus) with EP300 (via CH1 domain); the interaction is stimulated in response to hypoxia. Interacts with PPARA. Interacts (via C-terminus) with TFAP2A, TFAP2B and TFAP2C. Interacts (via C-terminus) with SMAD2. Interacts (via C-terminus) with SMAD3 (via MH2 domain). Interacts with LHX2 (via LIM domains). Interacts with WT1 isoform 1 and isoform 3. As to expression, ubiquitous.

It is found in the nucleus. Functionally, transcriptional coactivator of the p300/CBP-mediated transcription complex. Acts as a bridge, linking TFAP2 transcription factors and the p300/CBP transcriptional coactivator complex in order to stimulate TFAP2-mediated transcriptional activation. Positively regulates TGF-beta signaling through its association with the SMAD/p300/CBP-mediated transcriptional coactivator complex. Stimulates the peroxisome proliferator-activated receptors PPARA transcriptional activity. Enhances estrogen-dependent transactivation mediated by estrogen receptors. Also acts as a transcriptional corepressor; interferes with the binding of the transcription factors HIF1A or STAT2 and the p300/CBP transcriptional coactivator complex. Participates in sex determination and early gonad development by stimulating transcription activation of SRY. Plays a role in controlling left-right patterning during embryogenesis; potentiates transcriptional activation of NODAL-mediated gene transcription in the left lateral plate mesoderm (LPM). Plays an essential role in differentiation of the adrenal cortex from the adrenogonadal primordium (AGP); stimulates WT1-mediated transcription activation thereby up-regulating the nuclear hormone receptor NR5A1 promoter activity. Associates with chromatin to the PITX2 P1 promoter region. This chain is Cbp/p300-interacting transactivator 2 (Cited2), found in Mus musculus (Mouse).